The chain runs to 164 residues: SsrA-binding protein (164 aa).

Belongs to the SmpB family.

The protein localises to the cytoplasm. Its function is as follows. Required for rescue of stalled ribosomes mediated by trans-translation. Binds to transfer-messenger RNA (tmRNA), required for stable association of tmRNA with ribosomes. tmRNA and SmpB together mimic tRNA shape, replacing the anticodon stem-loop with SmpB. tmRNA is encoded by the ssrA gene; the 2 termini fold to resemble tRNA(Ala) and it encodes a 'tag peptide', a short internal open reading frame. During trans-translation Ala-aminoacylated tmRNA acts like a tRNA, entering the A-site of stalled ribosomes, displacing the stalled mRNA. The ribosome then switches to translate the ORF on the tmRNA; the nascent peptide is terminated with the 'tag peptide' encoded by the tmRNA and targeted for degradation. The ribosome is freed to recommence translation, which seems to be the essential function of trans-translation. The protein is SsrA-binding protein of Synechococcus sp. (strain CC9311).